Here is a 180-residue protein sequence, read N- to C-terminus: ATP-dependent protease subunit HslV (180 aa).

T6 is an active-site residue. 3 residues coordinate Na(+): G162, C165, and T168.

This sequence belongs to the peptidase T1B family. HslV subfamily. A double ring-shaped homohexamer of HslV is capped on each side by a ring-shaped HslU homohexamer. The assembly of the HslU/HslV complex is dependent on binding of ATP.

It is found in the cytoplasm. The enzyme catalyses ATP-dependent cleavage of peptide bonds with broad specificity.. With respect to regulation, allosterically activated by HslU binding. Functionally, protease subunit of a proteasome-like degradation complex believed to be a general protein degrading machinery. The polypeptide is ATP-dependent protease subunit HslV (Oleidesulfovibrio alaskensis (strain ATCC BAA-1058 / DSM 17464 / G20) (Desulfovibrio alaskensis)).